Here is a 537-residue protein sequence, read N- to C-terminus: CTP synthase (537 aa).

The interval 1 to 267 (MTKYIFVTGG…DQIVCDHLKL (267 aa)) is amidoligase domain. Ser-13 provides a ligand contact to CTP. A UTP-binding site is contributed by Ser-13. ATP is bound at residue 14–19 (SIGKGI). Tyr-54 lines the L-glutamine pocket. Asp-71 provides a ligand contact to ATP. Residues Asp-71 and Glu-141 each contribute to the Mg(2+) site. Residues 148–150 (DIE), 188–193 (KTKPTQ), and Lys-224 each bind CTP. UTP is bound by residues 188-193 (KTKPTQ) and Lys-224. 240–242 (RDV) lines the ATP pocket. A Glutamine amidotransferase type-1 domain is found at 292-535 (RIALVGKYVE…VTAAVKNKNQ (244 aa)). Gly-354 contributes to the L-glutamine binding site. Cys-381 (nucleophile; for glutamine hydrolysis) is an active-site residue. L-glutamine is bound by residues 382-385 (LGMQ), Glu-405, and Arg-463. Catalysis depends on residues His-508 and Glu-510.

This sequence belongs to the CTP synthase family. In terms of assembly, homotetramer.

It carries out the reaction UTP + L-glutamine + ATP + H2O = CTP + L-glutamate + ADP + phosphate + 2 H(+). It catalyses the reaction L-glutamine + H2O = L-glutamate + NH4(+). The enzyme catalyses UTP + NH4(+) + ATP = CTP + ADP + phosphate + 2 H(+). It participates in pyrimidine metabolism; CTP biosynthesis via de novo pathway; CTP from UDP: step 2/2. With respect to regulation, allosterically activated by GTP, when glutamine is the substrate; GTP has no effect on the reaction when ammonia is the substrate. The allosteric effector GTP functions by stabilizing the protein conformation that binds the tetrahedral intermediate(s) formed during glutamine hydrolysis. Inhibited by the product CTP, via allosteric rather than competitive inhibition. In terms of biological role, catalyzes the ATP-dependent amination of UTP to CTP with either L-glutamine or ammonia as the source of nitrogen. Regulates intracellular CTP levels through interactions with the four ribonucleotide triphosphates. The protein is CTP synthase of Streptococcus equi subsp. zooepidemicus (strain H70).